We begin with the raw amino-acid sequence, 385 residues long: Acetate kinase (385 aa).

Asparagine 8 provides a ligand contact to Mg(2+). Lysine 15 contacts ATP. Substrate is bound at residue arginine 85. The Proton donor/acceptor role is filled by aspartate 142. Residues 200–204 (HLGNG), 275–277 (DMR), and 323–327 (GIGEN) each bind ATP. Glutamate 373 serves as a coordination point for Mg(2+).

This sequence belongs to the acetokinase family. Homodimer. Mg(2+) is required as a cofactor. It depends on Mn(2+) as a cofactor.

The protein localises to the cytoplasm. It carries out the reaction acetate + ATP = acetyl phosphate + ADP. Its pathway is metabolic intermediate biosynthesis; acetyl-CoA biosynthesis; acetyl-CoA from acetate: step 1/2. In terms of biological role, catalyzes the formation of acetyl phosphate from acetate and ATP. Can also catalyze the reverse reaction. This chain is Acetate kinase, found in Francisella tularensis subsp. holarctica (strain OSU18).